We begin with the raw amino-acid sequence, 304 residues long: Homoserine kinase (304 aa).

86–96 (PLARGLGSSAA) serves as a coordination point for ATP.

The protein belongs to the GHMP kinase family. Homoserine kinase subfamily.

It is found in the cytoplasm. It carries out the reaction L-homoserine + ATP = O-phospho-L-homoserine + ADP + H(+). It participates in amino-acid biosynthesis; L-threonine biosynthesis; L-threonine from L-aspartate: step 4/5. In terms of biological role, catalyzes the ATP-dependent phosphorylation of L-homoserine to L-homoserine phosphate. This Carboxydothermus hydrogenoformans (strain ATCC BAA-161 / DSM 6008 / Z-2901) protein is Homoserine kinase.